Here is a 247-residue protein sequence, read N- to C-terminus: MADS-box protein defh21 (247 aa).

One can recognise an MADS-box domain in the interval 1–61 (MGRGKIEVKR…GKLTEYCTPP (61 aa)). Residues 91–183 (NDQVIKELTR…WLMSNQIQRQ (93 aa)) form the K-box domain.

As to expression, expressed exclusively in a few inner cell layers of the inner integuments of the ovules.

The protein localises to the nucleus. Probable transcription factor. The chain is MADS-box protein defh21 (DEFH21) from Antirrhinum majus (Garden snapdragon).